Consider the following 405-residue polypeptide: Putative phosphate permease PYRAB14010 (405 aa).

11 helical membrane passes run 3-23 (MDPW…AIGA), 44-64 (AVLI…KTVT), 82-102 (VLVY…VIAT), 114-134 (IIGG…VNWG), 138-158 (SVVL…FFIF), 181-201 (VWIG…VLHG), 207-227 (GVLK…SMIL), 264-284 (VANA…GMAG), 287-307 (VPVP…GVAT), 329-349 (FTID…GMPI), and 384-404 (FVTV…LWIV).

It belongs to the inorganic phosphate transporter (PiT) (TC 2.A.20) family.

It localises to the cell membrane. Potential transporter for phosphate. The sequence is that of Putative phosphate permease PYRAB14010 from Pyrococcus abyssi (strain GE5 / Orsay).